The primary structure comprises 118 residues: Large ribosomal subunit protein uL18 (118 aa).

Belongs to the universal ribosomal protein uL18 family. In terms of assembly, part of the 50S ribosomal subunit; part of the 5S rRNA/L5/L18/L25 subcomplex. Contacts the 5S and 23S rRNAs.

In terms of biological role, this is one of the proteins that bind and probably mediate the attachment of the 5S RNA into the large ribosomal subunit, where it forms part of the central protuberance. The chain is Large ribosomal subunit protein uL18 from Campylobacter concisus (strain 13826).